A 1654-amino-acid chain; its full sequence is MATDGASCEPDFSRSPEDAAGATAEPAKKEFDVDTLSKSELRMLLSVMEGELEARDLVIEALRARRKEVFIQERYGRFNLNDPFLALQRDYEAGAGDKEKKPVCTNPLSILEAVMAHCRKMQERMSTQLAAAESRQKKLEMEKLQLQALEQEHKKLSACLDEERNKNKHVVLMLVKECKQLSGKVIEEAQKLDEVMTKLEEEKKKTTALEEELSAEKQRSTEMEAQMEKQLSEFDTEREQLRAKLHREEAHTADLKEEIDKMKKMIEQLKRGSDSKPGLSLPRKTKDRRLISVSVGTEVSVTKSVACQTDSAIESIEPVKKLPLTVPAKPSTGSPLVSASTKGNMCTNATLVRPGIDRQASHGDLTISSVPAAPTPSASRTEENGPSTGSAPDPTSSTPPLPNNAAPPTVQTPGTAAQSYSQAPPVHSLHSPCANVSLHPGLNPRIQAARFRFQGNANDPDQNGNTSQSPPSRDVSPTSRDNLVAKQLARSTVTQALSRFTSPQTGAPPRPGAAPTGDVSSHTPVSRTSLKTPGVSRVDRGNPPPIPPKKPGLSQTPSPPHPQLKVIMDSSRAASAGVKVDNKTVAVPPSSLPQGNRVISEENLLKSSSPQLPPKPSIDLTVAPAGCAVSALATSQVGAWPAEPPGLNQPACSESSLVIPNTIAFCSSINPVSASSCRTGASVSLLVTASGWSPSLTPLLMSGGPAPLAGRPTLLQQAAAQGNVTLLSMLLNEEGLDINYSCEDGHSALYSAAKNGHTDCVRLLLNAQAQVNAADKNGFTPLCAAAAQGHFKCIELLIANDANINHAADGGQTPLYLACKNGNNECIKLLLGAGSDRSVKTRDGWTPVHAAVDTGNVDNLKLLMYYEAPIPGNSFNEEKLESNIIDLDQEEESPEGIPKTVVPADLINHADREGWTAAHIAASKGFKNCLEILCRHRGLEPERRDKCSRTAHDVATDDCKHLLENLHAFKIPLRISIAEIQPGNHGSDDFECDNIICTLNIRKQTSWDDFSKAVSQALINHFQAVSSDGWWTLEDMTFNNTADSSIGLGASSVQSIMLGNVPWSAGQNFTLFPWEFMRKNKAEQVTVILSGPQEGCLSSVSYTSMIPLQMLQNYLRLVEQYHNVIFHGPEGSLQDYIAHQLALCMKHRQIAAGFTCEIVKAQVHAGFSKEQLVDLFISSACLIPVKQSPVNKKIIIILENLEKSSLSELLGDFLTPLENRSTETPYTLQKGNGMSECYYFHENCFLMGTIAKACLQGSDLLVQQHFRWVQLRWDGEPMQGLLQRFLRRKVVNKFRGQLPSPCDPVCRTVDWALAVWCQLNSCIARLGTPEALLGPKYFLSCPVVPGHAQATVKWMSHLWNAIIAPRVQEAILSRASVKRQHSLGQTTAKKHPSQGQQAIVKAALSILLNKAVLHGCPLQRAELDQHTADFKGGSFPLSMVSSYNSCSRKKAESGAWRKVSTSPRKKSGHFSSPVWNKPDLSEEGIKNKAISQLNYNGSALLAKQKSLENDLSLTLDQRLSLGSDDETDLVKELQNMCSSKSESDISKIADSRDDLRRLHSSGNNPAFSAAVNNPKMPVSQKEVSPLSSHQTTECSNNKSKTELGVSRVRSFLPVPRSKVTQCSQNTKRSSSSSNTRQIEINNNSKEEIWNLRKK.

Residues 1-31 (MATDGASCEPDFSRSPEDAAGATAEPAKKEF) form a disordered region. Residues 119 to 276 (RKMQERMSTQ…EQLKRGSDSK (158 aa)) adopt a coiled-coil conformation. Disordered stretches follow at residues 361–432 (SHGD…LHSP), 455–480 (GNAN…PTSR), and 495–596 (QALS…PQGN). A compositionally biased stretch (low complexity) spans 368-379 (SSVPAAPTPSAS). 2 stretches are compositionally biased toward polar residues: residues 384–395 (NGPSTGSAPDPT) and 411–422 (QTPGTAAQSYSQ). R499 bears the Asymmetric dimethylarginine mark. A compositionally biased stretch (polar residues) spans 518–531 (DVSSHTPVSRTSLK). ANK repeat units follow at residues 710–740 (GRPT…DINY), 744–773 (DGHS…QVNA), 777–806 (NGFT…NINH), 810–839 (GGQT…DRSV), 843–872 (DGWT…PIPG), and 913–943 (EGWT…EPER). The interval 1454 to 1478 (GAWRKVSTSPRKKSGHFSSPVWNKP) is disordered. Residue S1523 is modified to Phosphoserine. The interval 1556 to 1654 (RRLHSSGNNP…KEEIWNLRKK (99 aa)) is disordered. Residues 1581 to 1598 (KEVSPLSSHQTTECSNNK) show a composition bias toward polar residues. The segment covering 1623-1637 (SQNTKRSSSSSNTRQ) has biased composition (low complexity). A compositionally biased stretch (basic and acidic residues) spans 1644–1654 (SKEEIWNLRKK).

In terms of assembly, interacts with CTTN/cortactin SH3 domain. Interacts with STRN, STRN4/zinedin and MOB4/phocein; this interactions mediate the association with the STRIPAK core complex and may regulate dendritic spine distribution of the STRIPAK complex in hippocampal neurons. Activation of glutamate receptors weakens the interaction with STRN and STRN4.

The protein resides in the cytoplasm. The protein localises to the cell cortex. Its subcellular location is the cell projection. It is found in the dendritic spine. Its function is as follows. Regulates the dendritic spine distribution of CTTN/cortactin in hippocampal neurons, and thus controls dendritic spinogenesis and dendritic spine maintenance. Associates with the striatin-interacting phosphatase and kinase (STRIPAK) core complex to regulate dendritic spine distribution of the STRIPAK complex in hippocampal neurons. The chain is Cortactin-binding protein 2 (CTTNBP2) from Atelerix albiventris (Middle-African hedgehog).